The primary structure comprises 562 residues: Arginine--tRNA ligase (562 aa).

Positions 121-131 (PNIAKPFSVGH) match the 'HIGH' region motif.

Belongs to the class-I aminoacyl-tRNA synthetase family. In terms of assembly, monomer.

It localises to the cytoplasm. It catalyses the reaction tRNA(Arg) + L-arginine + ATP = L-arginyl-tRNA(Arg) + AMP + diphosphate. The sequence is that of Arginine--tRNA ligase from Streptococcus suis (strain 98HAH33).